The following is a 224-amino-acid chain: UPF0758 protein NE1464 (224 aa).

Positions 102 to 224 (IMDSPQSVRN…VVSFAERGLI (123 aa)) constitute an MPN domain. Residues histidine 173, histidine 175, and aspartate 186 each coordinate Zn(2+). Positions 173-186 (HNHPSGIAEPSTAD) match the JAMM motif motif.

It belongs to the UPF0758 family.

This chain is UPF0758 protein NE1464, found in Nitrosomonas europaea (strain ATCC 19718 / CIP 103999 / KCTC 2705 / NBRC 14298).